A 297-amino-acid chain; its full sequence is Bifunctional protein FolD 1 (297 aa).

NADP(+) is bound by residues 164–166 (GRS) and Thr-230.

The protein belongs to the tetrahydrofolate dehydrogenase/cyclohydrolase family. In terms of assembly, homodimer.

The catalysed reaction is (6R)-5,10-methylene-5,6,7,8-tetrahydrofolate + NADP(+) = (6R)-5,10-methenyltetrahydrofolate + NADPH. It catalyses the reaction (6R)-5,10-methenyltetrahydrofolate + H2O = (6R)-10-formyltetrahydrofolate + H(+). The protein operates within one-carbon metabolism; tetrahydrofolate interconversion. Functionally, catalyzes the oxidation of 5,10-methylenetetrahydrofolate to 5,10-methenyltetrahydrofolate and then the hydrolysis of 5,10-methenyltetrahydrofolate to 10-formyltetrahydrofolate. The sequence is that of Bifunctional protein FolD 1 from Rhodococcus jostii (strain RHA1).